Reading from the N-terminus, the 271-residue chain is S-adenosylmethionine decarboxylase proenzyme (271 aa).

Residue S121 is the Schiff-base intermediate with substrate; via pyruvic acid of the active site. The residue at position 121 (S121) is a Pyruvic acid (Ser); by autocatalysis. H126 serves as the catalytic Proton acceptor; for processing activity. C149 (proton donor; for catalytic activity) is an active-site residue.

The protein belongs to the prokaryotic AdoMetDC family. Type 2 subfamily. Heterooctamer of four alpha and four beta chains arranged as a tetramer of alpha/beta heterodimers. It depends on pyruvate as a cofactor. In terms of processing, is synthesized initially as an inactive proenzyme. Formation of the active enzyme involves a self-maturation process in which the active site pyruvoyl group is generated from an internal serine residue via an autocatalytic post-translational modification. Two non-identical subunits are generated from the proenzyme in this reaction, and the pyruvate is formed at the N-terminus of the alpha chain, which is derived from the carboxyl end of the proenzyme. The post-translation cleavage follows an unusual pathway, termed non-hydrolytic serinolysis, in which the side chain hydroxyl group of the serine supplies its oxygen atom to form the C-terminus of the beta chain, while the remainder of the serine residue undergoes an oxidative deamination to produce ammonia and the pyruvoyl group blocking the N-terminus of the alpha chain.

It catalyses the reaction S-adenosyl-L-methionine + H(+) = S-adenosyl 3-(methylsulfanyl)propylamine + CO2. The protein operates within amine and polyamine biosynthesis; S-adenosylmethioninamine biosynthesis; S-adenosylmethioninamine from S-adenosyl-L-methionine: step 1/1. Functionally, catalyzes the decarboxylation of S-adenosylmethionine to S-adenosylmethioninamine (dcAdoMet), the propylamine donor required for the synthesis of the polyamines spermine and spermidine from the diamine putrescine. The polypeptide is S-adenosylmethionine decarboxylase proenzyme (Clostridium beijerinckii (strain ATCC 51743 / NCIMB 8052) (Clostridium acetobutylicum)).